The chain runs to 788 residues: Protein translocase subunit SecA 2 (788 aa).

ATP-binding positions include Gln-86, 104 to 108 (GEGKT), and Asp-493.

Belongs to the SecA family. As to quaternary structure, monomer and homodimer. Part of the essential Sec protein translocation apparatus which comprises SecA, SecYEG and auxiliary proteins SecDF. Other proteins may also be involved.

It is found in the cell membrane. The protein resides in the cytoplasm. It catalyses the reaction ATP + H2O + cellular proteinSide 1 = ADP + phosphate + cellular proteinSide 2.. Functionally, part of the Sec protein translocase complex. Interacts with the SecYEG preprotein conducting channel. Has a central role in coupling the hydrolysis of ATP to the transfer of proteins into and across the cell membrane, serving as an ATP-driven molecular motor driving the stepwise translocation of polypeptide chains across the membrane. This chain is Protein translocase subunit SecA 2, found in Geobacillus thermodenitrificans (strain NG80-2).